A 309-amino-acid polypeptide reads, in one-letter code: MTLPFTLQQLRILKAIATEKSFTRAAEVLFVSQPSLSKQIKTLESRLNISLLNRENNIVSLTQAGKLFLEYSERILALCEESCRVLNDLKTGDRGNLIVGASQTIGTYLMPRVLALFAQNHPQINIEVHVDSTRKIAKRVLEGDIDIAVVGGNIPEEIEKNLKVEDFVNDELILIIPKSHPFALKKKKKINKDDLYHLNFITLNSNSTIRKLIDNILIQIAFEPKQFNIIMQLNSIEAIKTAVSLGLGAAFVSSSAIEKEIELKTIEIVTIEDIKITRILSIISNPECYRSKAVDLFYNELWTLKNTSN.

One can recognise an HTH lysR-type domain in the interval 5-62 (FTLQQLRILKAIATEKSFTRAAEVLFVSQPSLSKQIKTLESRLNISLLNRENNIVSLT). Positions 22-41 (FTRAAEVLFVSQPSLSKQIK) form a DNA-binding region, H-T-H motif.

This sequence belongs to the LysR transcriptional regulatory family.

It is found in the plastid. The protein resides in the chloroplast. Functionally, trans-acting transcriptional regulator of RuBisCO genes (rbcL and rbcS) expression. This is Probable RuBisCO transcriptional regulator (rbcR) from Trieres chinensis (Marine centric diatom).